We begin with the raw amino-acid sequence, 992 residues long: ATP-dependent 6-phosphofructokinase subunit alpha (992 aa).

The N-terminal catalytic PFK domain 1 stretch occupies residues 1-558; that stretch reads MNNSVYGVAF…LYSNFMSTTV (558 aa). Residues Gly193, 256–257, and 286–289 contribute to the ATP site; these read RS and GDGS. Residue Asp287 participates in Mg(2+) binding. Residues 332-334, Arg369, 376-378, Glu433, Lys460, and 466-469 each bind beta-D-fructose 6-phosphate; these read SID, MGR, and HVQR. The Proton acceptor role is filled by Asp334. Residues 559-572 form an interdomain linker region; the sequence is NDDGSQLLPEADRL. The segment at 573 to 992 is C-terminal regulatory PFK domain 2; it reads NIAIVHVGAP…AAKEDSALYV (420 aa). Beta-D-fructose 2,6-bisphosphate-binding positions include Arg643, 700–704, Arg738, 745–747, Glu805, Arg831, 837–840, and Arg929; these read TVSNN, QGG, and HVQQ.

Belongs to the phosphofructokinase type A (PFKA) family. ATP-dependent PFK group I subfamily. Eukaryotic two domain clade 'E' sub-subfamily. In terms of assembly, heterooctamer of 4 alpha and 4 beta chains. The cofactor is Mg(2+).

The protein localises to the cytoplasm. The enzyme catalyses beta-D-fructose 6-phosphate + ATP = beta-D-fructose 1,6-bisphosphate + ADP + H(+). Its pathway is carbohydrate degradation; glycolysis; D-glyceraldehyde 3-phosphate and glycerone phosphate from D-glucose: step 3/4. With respect to regulation, allosterically activated by ADP, AMP, or fructose 2,6-bisphosphate, and allosterically inhibited by ATP or citrate. Its function is as follows. Catalyzes the phosphorylation of D-fructose 6-phosphate to fructose 1,6-bisphosphate by ATP, the first committing step of glycolysis. The sequence is that of ATP-dependent 6-phosphofructokinase subunit alpha (PFK1) from Kluyveromyces lactis (strain ATCC 8585 / CBS 2359 / DSM 70799 / NBRC 1267 / NRRL Y-1140 / WM37) (Yeast).